The chain runs to 396 residues: S-adenosylmethionine synthase (396 aa).

His-16 contributes to the ATP binding site. Asp-18 lines the Mg(2+) pocket. Glu-44 contacts K(+). 2 residues coordinate L-methionine: Glu-57 and Gln-100. The interval 100–110 is flexible loop; it reads QSPDIAQGVDR. ATP is bound by residues 167–169, 232–233, Asp-241, 247–248, Ala-264, and Lys-268; these read DAK, RF, and RK. Position 241 (Asp-241) interacts with L-methionine. L-methionine is bound at residue Lys-272.

The protein belongs to the AdoMet synthase family. In terms of assembly, homotetramer; dimer of dimers. Mg(2+) is required as a cofactor. K(+) serves as cofactor.

It localises to the cytoplasm. It carries out the reaction L-methionine + ATP + H2O = S-adenosyl-L-methionine + phosphate + diphosphate. It functions in the pathway amino-acid biosynthesis; S-adenosyl-L-methionine biosynthesis; S-adenosyl-L-methionine from L-methionine: step 1/1. Its function is as follows. Catalyzes the formation of S-adenosylmethionine (AdoMet) from methionine and ATP. The overall synthetic reaction is composed of two sequential steps, AdoMet formation and the subsequent tripolyphosphate hydrolysis which occurs prior to release of AdoMet from the enzyme. This Ralstonia pickettii (strain 12J) protein is S-adenosylmethionine synthase.